The primary structure comprises 506 residues: Galactose/methyl galactoside import ATP-binding protein MglA (506 aa).

ABC transporter domains lie at 14–249 (LTMT…VGRE) and 260–506 (TPKE…AKYL). Position 46-53 (46-53 (GENGAGKS)) interacts with ATP.

Belongs to the ABC transporter superfamily. Galactose/methyl galactoside importer (TC 3.A.1.2.3) family. In terms of assembly, the complex is composed of one ATP-binding protein (MglA), two transmembrane proteins (MglC) and a solute-binding protein (MglB).

The protein resides in the cell inner membrane. The enzyme catalyses D-galactose(out) + ATP + H2O = D-galactose(in) + ADP + phosphate + H(+). It carries out the reaction methyl beta-D-galactoside(out) + ATP + H2O = methyl beta-D-galactoside(in) + ADP + phosphate + H(+). In terms of biological role, part of the ABC transporter complex MglABC involved in galactose/methyl galactoside import. Responsible for energy coupling to the transport system. This chain is Galactose/methyl galactoside import ATP-binding protein MglA, found in Pasteurella multocida (strain Pm70).